A 478-amino-acid chain; its full sequence is Alcohol dehydrogenase (quinone), cytochrome c subunit (478 aa).

An N-terminal signal peptide occupies residues 1–36 (MLNALTRDRLVSEMKQGWKLAAAIGLMAVSFGAAHA). Gln-37 is subject to Pyrrolidone carboxylic acid. 3 consecutive Cytochrome c domains span residues 42–145 (ALIK…MHGV), 189–304 (PEVA…KSMP), and 327–417 (GQGN…RKGW). Heme c is bound by residues Cys-56, Cys-59, His-60, Cys-204, Cys-207, His-208, Cys-340, Cys-343, and His-344.

The alcohol dehydrogenase multicomponent enzyme system is composed of a dehydrogenase subunit I (AdhA), a cytochrome c subunit II (AdhB) and a subunit III (AdhS). It depends on heme c as a cofactor.

Its subcellular location is the cell membrane. It carries out the reaction ethanol + a ubiquinone = a ubiquinol + acetaldehyde. 2,6-dichloro-4-dicyanovinylphenol (PC16) and antimycin A inhibit ubiquinol oxidation activity more selectively than the ubiquinone reductase activity. Its function is as follows. Cytochrome c component of the alcohol dehydrogenase multicomponent enzyme system which is involved in the production of acetic acid and in the ethanol oxidase respiratory chain. Quinohemoprotein alcohol dehydrogenase (ADH) catalyzes the oxidation of ethanol to acetaldehyde by transferring electrons to the ubiquinone embedded in the membrane phospholipids. The electrons transfer from ethanol to membranous ubiquinone occurs from pyrroloquinoline quinone (PQQ) to one heme c in subunit I (AdhA), and finally to two heme c in subunit II (AdhB). Besides ubiquinone reduction, ADH also has a ubiquinol (QH2) oxidation reaction which mediates electron transfer from ubiquinol to the non-energy generating bypass oxidase system. The electrons transfer occurs from ubiquinol (QH2) to the additional heme c within subunit II (AdhB). Also able to use quinone analogs such as 2,3-dimethoxy-5-methyl-6-n-decyl-1,4-benzoquinone (DB) and 2,3-dimethoxy-5-methyl-6-n-pentyl-1,4-benzoquinone (PB). The protein is Alcohol dehydrogenase (quinone), cytochrome c subunit of Gluconobacter oxydans (strain 621H) (Gluconobacter suboxydans).